A 60-amino-acid chain; its full sequence is Large ribosomal subunit protein bL32 (60 aa).

The span at 1-19 (MAVPKRKKSKSRRNMHRSH) shows a compositional bias: basic residues. The segment at 1-24 (MAVPKRKKSKSRRNMHRSHHAIEP) is disordered.

This sequence belongs to the bacterial ribosomal protein bL32 family.

The chain is Large ribosomal subunit protein bL32 from Wolbachia pipientis wMel.